The sequence spans 94 residues: Putative FXYD domain-containing ion transport regulator 8 (94 aa).

The N-terminal stretch at 1 to 18 is a signal peptide; the sequence is MEVVLIFVYSLLVPVVLA. The Extracellular portion of the chain corresponds to 19–34; the sequence is SAAKEKEIDPFHYNYQ. A helical membrane pass occupies residues 35–58; it reads TLRIGGLVFDVVLFLVPSCHLLSH. The Cytoplasmic segment spans residues 59 to 94; it reads RCKCSFNQKPQDPGDKEAQVENFITANAKEPQKAKN. A disordered region spans residues 66 to 94; sequence QKPQDPGDKEAQVENFITANAKEPQKAKN.

The protein belongs to the FXYD family.

The protein resides in the membrane. In Homo sapiens (Human), this protein is Putative FXYD domain-containing ion transport regulator 8 (FXYD6P3).